The chain runs to 318 residues: Ribokinase (318 aa).

Residues 11-13 (NTD), 41-45 (GKGAN), and E146 each bind substrate. Residues N190 and 229-234 (TLGSQG) contribute to the ATP site. The K(+) site is built by D256 and T258. 261–262 (GD) is a binding site for ATP. Position 262 (D262) interacts with substrate. D262 functions as the Proton acceptor in the catalytic mechanism. K(+) contacts are provided by T292, R295, G297, and S301.

Belongs to the carbohydrate kinase PfkB family. Ribokinase subfamily. Homodimer. Mg(2+) is required as a cofactor.

It is found in the cytoplasm. The protein resides in the nucleus. The catalysed reaction is D-ribose + ATP = D-ribose 5-phosphate + ADP + H(+). Its pathway is carbohydrate metabolism; D-ribose degradation; D-ribose 5-phosphate from beta-D-ribopyranose: step 2/2. Activated by a monovalent cation that binds near, but not in, the active site. The most likely occupant of the site in vivo is potassium. Ion binding induces a conformational change that may alter substrate affinity. Catalyzes the phosphorylation of ribose at O-5 in a reaction requiring ATP and magnesium. The resulting D-ribose-5-phosphate can then be used either for sythesis of nucleotides, histidine, and tryptophan, or as a component of the pentose phosphate pathway. This is Ribokinase from Schizosaccharomyces pombe (strain 972 / ATCC 24843) (Fission yeast).